Reading from the N-terminus, the 236-residue chain is 1-(5-phosphoribosyl)-5-[(5-phosphoribosylamino)methylideneamino] imidazole-4-carboxamide isomerase (236 aa).

Asp-8 functions as the Proton acceptor in the catalytic mechanism. Asp-129 (proton donor) is an active-site residue.

The protein belongs to the HisA/HisF family.

Its subcellular location is the cytoplasm. The catalysed reaction is 1-(5-phospho-beta-D-ribosyl)-5-[(5-phospho-beta-D-ribosylamino)methylideneamino]imidazole-4-carboxamide = 5-[(5-phospho-1-deoxy-D-ribulos-1-ylimino)methylamino]-1-(5-phospho-beta-D-ribosyl)imidazole-4-carboxamide. Its pathway is amino-acid biosynthesis; L-histidine biosynthesis; L-histidine from 5-phospho-alpha-D-ribose 1-diphosphate: step 4/9. This chain is 1-(5-phosphoribosyl)-5-[(5-phosphoribosylamino)methylideneamino] imidazole-4-carboxamide isomerase, found in Ruminiclostridium cellulolyticum (strain ATCC 35319 / DSM 5812 / JCM 6584 / H10) (Clostridium cellulolyticum).